A 235-amino-acid polypeptide reads, in one-letter code: Ribonuclease 3 (235 aa).

The region spanning 6 to 131 (IDQLKKLTGH…LIAVIYLDGG (126 aa)) is the RNase III domain. Residue glutamate 44 coordinates Mg(2+). Residue aspartate 48 is part of the active site. Mg(2+) is bound by residues aspartate 117 and glutamate 120. Residue glutamate 120 is part of the active site. In terms of domain architecture, DRBM spans 156 to 225 (DAKTELQEWA…AEKILRREGM (70 aa)).

Belongs to the ribonuclease III family. Homodimer. Mg(2+) is required as a cofactor.

The protein localises to the cytoplasm. It catalyses the reaction Endonucleolytic cleavage to 5'-phosphomonoester.. Its function is as follows. Digests double-stranded RNA. Involved in the processing of primary rRNA transcript to yield the immediate precursors to the large and small rRNAs (23S and 16S). Processes some mRNAs, and tRNAs when they are encoded in the rRNA operon. Processes pre-crRNA and tracrRNA of type II CRISPR loci if present in the organism. The sequence is that of Ribonuclease 3 from Bartonella bacilliformis (strain ATCC 35685 / KC583 / Herrer 020/F12,63).